Consider the following 378-residue polypeptide: Acetylornithine deacetylase (378 aa).

Residue H76 participates in Zn(2+) binding. Residue D78 is part of the active site. D108 contacts Zn(2+). The active site involves E140. Zn(2+)-binding residues include E141, E165, and H351.

This sequence belongs to the peptidase M20A family. ArgE subfamily. As to quaternary structure, homodimer. Zn(2+) is required as a cofactor. The cofactor is Co(2+). It depends on glutathione as a cofactor.

It localises to the cytoplasm. The enzyme catalyses N(2)-acetyl-L-ornithine + H2O = L-ornithine + acetate. It participates in amino-acid biosynthesis; L-arginine biosynthesis; L-ornithine from N(2)-acetyl-L-ornithine (linear): step 1/1. Catalyzes the hydrolysis of the amide bond of N(2)-acetylated L-amino acids. Cleaves the acetyl group from N-acetyl-L-ornithine to form L-ornithine, an intermediate in L-arginine biosynthesis pathway, and a branchpoint in the synthesis of polyamines. The polypeptide is Acetylornithine deacetylase (Aliivibrio fischeri (strain MJ11) (Vibrio fischeri)).